The primary structure comprises 101 residues: Acylphosphatase (101 aa).

The 87-residue stretch at 12–98 folds into the Acylphosphatase-like domain; it reads RVHVFVTGRV…EGLRGFEVKR (87 aa). Active-site residues include Arg27 and Asn45.

It belongs to the acylphosphatase family.

It carries out the reaction an acyl phosphate + H2O = a carboxylate + phosphate + H(+). The protein is Acylphosphatase (acyP) of Trichormus variabilis (strain ATCC 29413 / PCC 7937) (Anabaena variabilis).